A 749-amino-acid chain; its full sequence is 5-methyltetrahydropteroyltriglutamate--homocysteine methyltransferase (749 aa).

Residues 15 to 18 and Lys114 each bind 5-methyltetrahydropteroyltri-L-glutamate; that span reads RELK. Residues 425 to 427 and Glu478 contribute to the L-homocysteine site; that span reads IGS. Residues 425-427 and Glu478 contribute to the L-methionine site; that span reads IGS. Trp555 is a binding site for 5-methyltetrahydropteroyltri-L-glutamate. Asp593 is an L-homocysteine binding site. Asp593 contacts L-methionine. Glu599 lines the 5-methyltetrahydropteroyltri-L-glutamate pocket. 3 residues coordinate Zn(2+): His636, Cys638, and Glu660. His689 functions as the Proton donor in the catalytic mechanism. Cys721 contacts Zn(2+).

Belongs to the vitamin-B12 independent methionine synthase family. Zn(2+) serves as cofactor.

It catalyses the reaction 5-methyltetrahydropteroyltri-L-glutamate + L-homocysteine = tetrahydropteroyltri-L-glutamate + L-methionine. It participates in amino-acid biosynthesis; L-methionine biosynthesis via de novo pathway; L-methionine from L-homocysteine (MetE route): step 1/1. Its function is as follows. Catalyzes the transfer of a methyl group from 5-methyltetrahydrofolate to homocysteine resulting in methionine formation. This chain is 5-methyltetrahydropteroyltriglutamate--homocysteine methyltransferase, found in Streptococcus suis (strain 05ZYH33).